Reading from the N-terminus, the 445-residue chain is Phosphoglucosamine mutase (445 aa).

The active-site Phosphoserine intermediate is the serine 102. 4 residues coordinate Mg(2+): serine 102, aspartate 241, aspartate 243, and aspartate 245. The residue at position 102 (serine 102) is a Phosphoserine.

It belongs to the phosphohexose mutase family. Mg(2+) serves as cofactor. In terms of processing, activated by phosphorylation.

The catalysed reaction is alpha-D-glucosamine 1-phosphate = D-glucosamine 6-phosphate. Catalyzes the conversion of glucosamine-6-phosphate to glucosamine-1-phosphate. The polypeptide is Phosphoglucosamine mutase (Acinetobacter baumannii (strain ACICU)).